Here is a 485-residue protein sequence, read N- to C-terminus: Glutamyl-tRNA(Gln) amidotransferase subunit A (485 aa).

Residues Lys79 and Ser154 each act as charge relay system in the active site. The active-site Acyl-ester intermediate is the Ser178.

The protein belongs to the amidase family. GatA subfamily. As to quaternary structure, heterotrimer of A, B and C subunits.

It catalyses the reaction L-glutamyl-tRNA(Gln) + L-glutamine + ATP + H2O = L-glutaminyl-tRNA(Gln) + L-glutamate + ADP + phosphate + H(+). Its function is as follows. Allows the formation of correctly charged Gln-tRNA(Gln) through the transamidation of misacylated Glu-tRNA(Gln) in organisms which lack glutaminyl-tRNA synthetase. The reaction takes place in the presence of glutamine and ATP through an activated gamma-phospho-Glu-tRNA(Gln). The sequence is that of Glutamyl-tRNA(Gln) amidotransferase subunit A from Staphylococcus aureus (strain MW2).